A 246-amino-acid polypeptide reads, in one-letter code: Large ribosomal subunit protein uL3 (246 aa).

Gln151 is modified (N5-methylglutamine).

It belongs to the universal ribosomal protein uL3 family. In terms of assembly, part of the 50S ribosomal subunit. Forms a cluster with proteins L14 and L19. Post-translationally, methylated by PrmB.

In terms of biological role, one of the primary rRNA binding proteins, it binds directly near the 3'-end of the 23S rRNA, where it nucleates assembly of the 50S subunit. This Bartonella bacilliformis (strain ATCC 35685 / KC583 / Herrer 020/F12,63) protein is Large ribosomal subunit protein uL3.